The sequence spans 430 residues: Tyrosine--tRNA ligase (430 aa).

Residue Tyr32 coordinates L-tyrosine. Residues 37 to 46 carry the 'HIGH' region motif; that stretch reads PTADSLHIGH. Positions 172 and 176 each coordinate L-tyrosine. The 'KMSKS' region motif lies at 232 to 236; it reads KFGKT. An ATP-binding site is contributed by Lys235. Positions 362–429 constitute an S4 RNA-binding domain; that stretch reads IKAVDLCTEK…GKKNYYLLIA (68 aa).

The protein belongs to the class-I aminoacyl-tRNA synthetase family. TyrS type 1 subfamily. In terms of assembly, homodimer.

It localises to the cytoplasm. It carries out the reaction tRNA(Tyr) + L-tyrosine + ATP = L-tyrosyl-tRNA(Tyr) + AMP + diphosphate + H(+). In terms of biological role, catalyzes the attachment of tyrosine to tRNA(Tyr) in a two-step reaction: tyrosine is first activated by ATP to form Tyr-AMP and then transferred to the acceptor end of tRNA(Tyr). This Parabacteroides distasonis (strain ATCC 8503 / DSM 20701 / CIP 104284 / JCM 5825 / NCTC 11152) protein is Tyrosine--tRNA ligase.